Consider the following 97-residue polypeptide: Co-chaperonin GroES (97 aa).

This sequence belongs to the GroES chaperonin family. In terms of assembly, heptamer of 7 subunits arranged in a ring. Interacts with the chaperonin GroEL.

It localises to the cytoplasm. Its function is as follows. Together with the chaperonin GroEL, plays an essential role in assisting protein folding. The GroEL-GroES system forms a nano-cage that allows encapsulation of the non-native substrate proteins and provides a physical environment optimized to promote and accelerate protein folding. GroES binds to the apical surface of the GroEL ring, thereby capping the opening of the GroEL channel. The polypeptide is Co-chaperonin GroES (Ectopseudomonas mendocina (strain ymp) (Pseudomonas mendocina)).